The chain runs to 125 residues: Small ribosomal subunit protein uS12 (125 aa).

Asp89 is modified (3-methylthioaspartic acid).

Belongs to the universal ribosomal protein uS12 family. In terms of assembly, part of the 30S ribosomal subunit. Contacts proteins S8 and S17. May interact with IF1 in the 30S initiation complex.

With S4 and S5 plays an important role in translational accuracy. In terms of biological role, interacts with and stabilizes bases of the 16S rRNA that are involved in tRNA selection in the A site and with the mRNA backbone. Located at the interface of the 30S and 50S subunits, it traverses the body of the 30S subunit contacting proteins on the other side and probably holding the rRNA structure together. The combined cluster of proteins S8, S12 and S17 appears to hold together the shoulder and platform of the 30S subunit. The chain is Small ribosomal subunit protein uS12 from Cupriavidus metallidurans (strain ATCC 43123 / DSM 2839 / NBRC 102507 / CH34) (Ralstonia metallidurans).